Here is a 68-residue protein sequence, read N- to C-terminus: uncharacterized protein (68 aa).

The N-terminal stretch at Met1–Ser28 is a signal peptide.

This is an uncharacterized protein from Escherichia coli (strain K12).